We begin with the raw amino-acid sequence, 528 residues long: Chaperonin GroEL, chloroplastic (528 aa).

ATP contacts are provided by residues 29–32 (TLGP), 86–90 (DGTTT), Gly414, 480–482 (DAA), and Asp496.

Belongs to the chaperonin (HSP60) family. Forms a cylinder of 14 subunits composed of two heptameric rings stacked back-to-back. Interacts with the co-chaperonin GroES.

The protein localises to the plastid. It localises to the chloroplast. The catalysed reaction is ATP + H2O + a folded polypeptide = ADP + phosphate + an unfolded polypeptide.. Functionally, together with its co-chaperonin GroES, plays an essential role in assisting protein folding. The GroEL-GroES system forms a nano-cage that allows encapsulation of the non-native substrate proteins and provides a physical environment optimized to promote and accelerate protein folding. This Pyropia yezoensis (Susabi-nori) protein is Chaperonin GroEL, chloroplastic.